The sequence spans 248 residues: PF03932 family protein CutC (248 aa).

It belongs to the CutC family. As to quaternary structure, homodimer.

Its subcellular location is the cytoplasm. The chain is PF03932 family protein CutC from Salmonella newport (strain SL254).